A 335-amino-acid polypeptide reads, in one-letter code: COP9 signalosome complex subunit 5 (335 aa).

One can recognise an MPN domain in the interval 51 to 187 (VRISAVALLK…IGAFRTFPKD (137 aa)). Zn(2+) is bound by residues H134, H136, and D147. Residues 134–147 (HSHPGYGCWLSGID) carry the JAMM motif motif.

Belongs to the peptidase M67A family. CSN5 subfamily. As to quaternary structure, component of the COP9 signalosome (CSN) complex.

It is found in the cytoplasm. Its subcellular location is the nucleus. In terms of biological role, catalytic component of the COP9 signalosome (CSN) complex that acts as an regulator of the ubiquitin (Ubl) conjugation pathway by mediating the deneddylation of the cullin subunit of SCF-type E3 ubiquitin-protein ligase complexes. The CSN complex seems to link protein degradation to sexual development. Required for fruit body formation. This chain is COP9 signalosome complex subunit 5 (rri1), found in Emericella nidulans (strain FGSC A4 / ATCC 38163 / CBS 112.46 / NRRL 194 / M139) (Aspergillus nidulans).